The sequence spans 339 residues: Methionine import ATP-binding protein MetN 2 (339 aa).

The region spanning 2 to 241 (ISFNNVSKLY…PKTKTTQNFV (240 aa)) is the ABC transporter domain. Position 38–45 (38–45 (GFSGAGKS)) interacts with ATP.

This sequence belongs to the ABC transporter superfamily. Methionine importer (TC 3.A.1.24) family. In terms of assembly, the complex is composed of two ATP-binding proteins (MetN), two transmembrane proteins (MetI) and a solute-binding protein (MetQ).

It is found in the cell membrane. It carries out the reaction L-methionine(out) + ATP + H2O = L-methionine(in) + ADP + phosphate + H(+). The enzyme catalyses D-methionine(out) + ATP + H2O = D-methionine(in) + ADP + phosphate + H(+). Functionally, part of the ABC transporter complex MetNIQ involved in methionine import. Responsible for energy coupling to the transport system. This Bacillus cereus (strain ATCC 14579 / DSM 31 / CCUG 7414 / JCM 2152 / NBRC 15305 / NCIMB 9373 / NCTC 2599 / NRRL B-3711) protein is Methionine import ATP-binding protein MetN 2.